The chain runs to 148 residues: SsrA-binding protein (148 aa).

The protein belongs to the SmpB family.

It localises to the cytoplasm. In terms of biological role, required for rescue of stalled ribosomes mediated by trans-translation. Binds to transfer-messenger RNA (tmRNA), required for stable association of tmRNA with ribosomes. tmRNA and SmpB together mimic tRNA shape, replacing the anticodon stem-loop with SmpB. tmRNA is encoded by the ssrA gene; the 2 termini fold to resemble tRNA(Ala) and it encodes a 'tag peptide', a short internal open reading frame. During trans-translation Ala-aminoacylated tmRNA acts like a tRNA, entering the A-site of stalled ribosomes, displacing the stalled mRNA. The ribosome then switches to translate the ORF on the tmRNA; the nascent peptide is terminated with the 'tag peptide' encoded by the tmRNA and targeted for degradation. The ribosome is freed to recommence translation, which seems to be the essential function of trans-translation. In Ehrlichia ruminantium (strain Gardel), this protein is SsrA-binding protein.